The following is a 298-amino-acid chain: Succinate dehydrogenase [ubiquinone] iron-sulfur subunit, mitochondrial (298 aa).

The 2Fe-2S ferredoxin-type domain occupies 59–147 (YRFNPEAPGA…STKIYPLPHM (89 aa)). [2Fe-2S] cluster contacts are provided by Cys107, Cys112, Cys115, and Cys127. The 4Fe-4S ferredoxin-type domain maps to 190–220 (ERDRLDGLYECILCACCSTSCPSYWWNADKY). Positions 200, 203, and 206 each coordinate [4Fe-4S] cluster. Cys210 provides a ligand contact to [3Fe-4S] cluster. Trp215 serves as a coordination point for a ubiquinone. Cys257 and Cys263 together coordinate [3Fe-4S] cluster. Cys267 serves as a coordination point for [4Fe-4S] cluster.

The protein belongs to the succinate dehydrogenase/fumarate reductase iron-sulfur protein family. Component of complex II composed of four subunits: a flavoprotein (FP), an iron-sulfur protein (IP), and a cytochrome b composed of a large and a small subunit. It depends on [2Fe-2S] cluster as a cofactor. The cofactor is [3Fe-4S] cluster. Requires [4Fe-4S] cluster as cofactor.

Its subcellular location is the mitochondrion inner membrane. It carries out the reaction a quinone + succinate = fumarate + a quinol. It functions in the pathway carbohydrate metabolism; tricarboxylic acid cycle; fumarate from succinate (eukaryal route): step 1/1. Iron-sulfur protein (IP) subunit of succinate dehydrogenase (SDH) that is involved in complex II of the mitochondrial electron transport chain and is responsible for transferring electrons from succinate to ubiquinone (coenzyme Q). The sequence is that of Succinate dehydrogenase [ubiquinone] iron-sulfur subunit, mitochondrial (sdhb-1) from Caenorhabditis elegans.